Consider the following 217-residue polypeptide: Dual specificity phosphatase 29 (217 aa).

The Tyrosine-protein phosphatase domain occupies 46-194 (HVNEVWPNLY…LRELDIKLAL (149 aa)). Residue 138–145 (HCAMGRSR) coordinates substrate. Residue cysteine 139 is the Phosphocysteine intermediate of the active site.

This sequence belongs to the protein-tyrosine phosphatase family. Non-receptor class dual specificity subfamily.

Its subcellular location is the cytoplasm. It is found in the nucleus. The catalysed reaction is O-phospho-L-tyrosyl-[protein] + H2O = L-tyrosyl-[protein] + phosphate. The enzyme catalyses O-phospho-L-seryl-[protein] + H2O = L-seryl-[protein] + phosphate. It carries out the reaction O-phospho-L-threonyl-[protein] + H2O = L-threonyl-[protein] + phosphate. Its function is as follows. Dual specificity phosphatase able to dephosphorylate phosphotyrosine, phosphoserine and phosphothreonine residues within the same substrate, with a preference for phosphotyrosine as a substrate. Involved in the modulation of AMPK and MAPK1/2 signaling pathways. This is Dual specificity phosphatase 29 (DUSP29) from Anolis carolinensis (Green anole).